Here is a 163-residue protein sequence, read N- to C-terminus: Putative 4-hydroxy-4-methyl-2-oxoglutarate aldolase (163 aa).

Residues 76–79 and Arg98 contribute to the substrate site; that span reads GDML. Residue Asp99 participates in a divalent metal cation binding.

The protein belongs to the class II aldolase/RraA-like family. As to quaternary structure, homotrimer. Requires a divalent metal cation as cofactor.

It carries out the reaction 4-hydroxy-4-methyl-2-oxoglutarate = 2 pyruvate. The enzyme catalyses oxaloacetate + H(+) = pyruvate + CO2. Its function is as follows. Catalyzes the aldol cleavage of 4-hydroxy-4-methyl-2-oxoglutarate (HMG) into 2 molecules of pyruvate. Also contains a secondary oxaloacetate (OAA) decarboxylase activity due to the common pyruvate enolate transition state formed following C-C bond cleavage in the retro-aldol and decarboxylation reactions. The chain is Putative 4-hydroxy-4-methyl-2-oxoglutarate aldolase from Pseudomonas entomophila (strain L48).